Here is a 790-residue protein sequence, read N- to C-terminus: Cadherin-18 (790 aa).

The first 24 residues, 1-24, serve as a signal peptide directing secretion; sequence MKITSTSCICPVLVCLCFVQRCYG. Positions 25–53 are excised as a propeptide; the sequence is TTHHGSIRGTRNQTKHIEGETEVHHRPKR. The N-linked (GlcNAc...) asparagine glycan is linked to Asn-36. 5 consecutive Cadherin domains span residues 54–159, 160–268, 269–383, 384–486, and 487–608; these read GWVW…APKF, TDGP…PPRF, PQKH…PPLF, SMPS…DNPP, and ELAR…FLSS. Residues 54 to 608 are Extracellular-facing; the sequence is GWVWNQFFVL…TCHAEAFLSS (555 aa). Asn-255 carries an N-linked (GlcNAc...) asparagine glycan. N-linked (GlcNAc...) asparagine glycans are attached at residues Asn-455 and Asn-536. The chain crosses the membrane as a helical span at residues 609–636; the sequence is AGLSTGALIAILLCVVILLAIVVLFITL. Residues 637–790 lie on the Cytoplasmic side of the membrane; that stretch reads RRSKKEPLII…YGEIESERTT (154 aa). Residue Ser-786 is modified to Phosphoserine.

It localises to the cell membrane. In terms of biological role, cadherins are calcium-dependent cell adhesion proteins. They preferentially interact with themselves in a homophilic manner in connecting cells; cadherins may thus contribute to the sorting of heterogeneous cell types. This Bos taurus (Bovine) protein is Cadherin-18 (CDH18).